Consider the following 720-residue polypeptide: Fatty acid CoA ligase Acsl3 (720 aa).

Residues 21 to 41 (ILLYFIHFIISLYTILTYIPF) form a helical; Signal-anchor for type III membrane protein membrane-spanning segment. The Cytoplasmic segment spans residues 42–720 (YFLCESKQEK…ADIERMYGRK (679 aa)). The residue at position 683 (Ser683) is a Phosphoserine.

The protein belongs to the ATP-dependent AMP-binding enzyme family. The cofactor is Mg(2+). Predominantly expressed in the brain, and to a much lesser extent, in lung, adrenal gland, kidney, small intestine, and adipose tissue but not detected in heart or liver.

It localises to the mitochondrion outer membrane. The protein localises to the peroxisome membrane. The protein resides in the microsome membrane. It is found in the endoplasmic reticulum membrane. The catalysed reaction is a long-chain fatty acid + ATP + CoA = a long-chain fatty acyl-CoA + AMP + diphosphate. The enzyme catalyses (5Z,8Z,11Z,14Z)-eicosatetraenoate + ATP + CoA = (5Z,8Z,11Z,14Z)-eicosatetraenoyl-CoA + AMP + diphosphate. It carries out the reaction a medium-chain fatty acid + ATP + CoA = a medium-chain fatty acyl-CoA + AMP + diphosphate. It catalyses the reaction 15-hydroxy-(5Z,8Z,11Z,13E)-eicosatetraenoate + ATP + CoA = 15-hydroxy-(5Z,8Z,11Z,13E)-eicosatetraenoyl-CoA + AMP + diphosphate. The catalysed reaction is 12-hydroxy-(5Z,8Z,10E,14Z)-eicosatetraenoate + ATP + CoA = 12-hydroxy-(5Z,8Z,10E,14Z)-eicosatetraenoyl-CoA + AMP + diphosphate. The enzyme catalyses 5-hydroxy-(6E,8Z,11Z,14Z)-eicosatetraenoate + ATP + CoA = 5-hydroxy-(6E,8Z,11Z,14Z)-eicosatetraenoyl-CoA + AMP + diphosphate. It carries out the reaction 14,15-epoxy-(5Z,8Z,11Z)-eicosatrienoate + ATP + CoA = 14,15-epoxy-(5Z,8Z,11Z)-eicosatrienoyl-CoA + AMP + diphosphate. It catalyses the reaction 11,12-epoxy-(5Z,8Z,14Z)-eicosatrienoate + ATP + CoA = 11,12-epoxy-(5Z,8Z,14Z)-eicosatrienoyl-CoA + AMP + diphosphate. The catalysed reaction is (E)-hexadec-2-enoate + ATP + CoA = (2E)-hexadecenoyl-CoA + AMP + diphosphate. The enzyme catalyses hexadecanoate + ATP + CoA = hexadecanoyl-CoA + AMP + diphosphate. It carries out the reaction tetradecanoate + ATP + CoA = tetradecanoyl-CoA + AMP + diphosphate. It catalyses the reaction dodecanoate + ATP + CoA = dodecanoyl-CoA + AMP + diphosphate. The catalysed reaction is octadecanoate + ATP + CoA = octadecanoyl-CoA + AMP + diphosphate. The enzyme catalyses eicosanoate + ATP + CoA = eicosanoyl-CoA + AMP + diphosphate. It carries out the reaction (9Z)-octadecenoate + ATP + CoA = (9Z)-octadecenoyl-CoA + AMP + diphosphate. It catalyses the reaction (9Z)-hexadecenoate + ATP + CoA = (9Z)-hexadecenoyl-CoA + AMP + diphosphate. The catalysed reaction is (9Z,12Z)-octadecadienoate + ATP + CoA = (9Z,12Z)-octadecadienoyl-CoA + AMP + diphosphate. The enzyme catalyses (9Z,12Z,15Z)-octadecatrienoate + ATP + CoA = (9Z,12Z,15Z)-octadecatrienoyl-CoA + AMP + diphosphate. It carries out the reaction (4Z,7Z,10Z,13Z,16Z,19Z)-docosahexaenoate + ATP + CoA = (4Z,7Z,10Z,13Z,16Z,19Z)-docosahexaenoyl-CoA + AMP + diphosphate. It catalyses the reaction (5Z,8Z,11Z,14Z,17Z)-eicosapentaenoate + ATP + CoA = (5Z,8Z,11Z,14Z,17Z)-eicosapentaenoyl-CoA + AMP + diphosphate. The catalysed reaction is a fatty acid + ATP + CoA = a fatty acyl-CoA + AMP + diphosphate. In terms of biological role, catalyzes the conversion of long-chain fatty acids to their active form acyl-CoA for both synthesis of cellular lipids, and degradation via beta-oxidation. ACSL3 is required for the incorporation of fatty acids into phosphatidylcholine, the major phospholipid located on the surface of VLDL (very low density lipoproteins). Has mainly an anabolic role in energy metabolism. Mediates hepatic lipogenesis. Preferentially uses myristate, laurate, arachidonate and eicosapentaenoate as substrates. Both isoforms exhibit the same level of activity. In Rattus norvegicus (Rat), this protein is Fatty acid CoA ligase Acsl3.